The chain runs to 228 residues: 5'(3')-deoxyribonucleotidase, mitochondrial (228 aa).

A mitochondrion-targeting transit peptide spans 1–31; the sequence is MIRLGGWCARRLCSAAVPAGRRGAAGGLGLA. The active-site Nucleophile is the Asp-41. 2 residues coordinate Mg(2+): Asp-41 and Asp-43. Asp-43 (proton donor) is an active-site residue. The substrate site is built by Asp-43, Phe-49, Phe-75, Trp-76, Val-77, Trp-96, Thr-130, and Lys-165. Position 176 (Asp-176) interacts with Mg(2+).

Belongs to the 5'(3')-deoxyribonucleotidase family. As to quaternary structure, homodimer. Requires Mg(2+) as cofactor. As to expression, highly expressed in heart, brain and skeletal muscle. Detected at very low levels in kidney and pancreas.

Its subcellular location is the mitochondrion. Its function is as follows. Dephosphorylates specifically the 5' and 2'(3')-phosphates of uracil and thymine deoxyribonucleotides, and so protects mitochondrial DNA replication from excess dTTP. Has only marginal activity towards dIMP and dGMP. The sequence is that of 5'(3')-deoxyribonucleotidase, mitochondrial (NT5M) from Homo sapiens (Human).